Reading from the N-terminus, the 506-residue chain is Protein spinster homolog 1 (506 aa).

A disordered region spans residues 1 to 42; it reads MSQADADITPFFADDNEGEGPVENGVGSPLPEDEEEESPSGV. Low complexity predominate over residues 21-30; sequence PVENGVGSPL. The next 12 helical transmembrane spans lie at 52-71, 87-107, 115-135, 149-169, 176-196, 207-227, 266-286, 310-330, 344-364, 373-393, 408-428, and 450-470; these read IVLCYINLLNYMDRFTVAGV, GLLQTVFICSYMFLAPLFGYL, LIMCVGIFFWSVVTLASSFIG, VGVGEASYSTIAPTIIADLFV, MLSIFYFAIPVGSGMGYIVGS, WALRVTPGLGLLAVFLLMLVV, FGFTAVAFVTGSLALWAPAFL, LIFGAITVVTGILGVASGVQA, LVCAAGLLLAAPFLYLSIMFA, VFIFLGETFLSMNWAIVADIL, FQIVLSHLLGDAISPYLIGVV, and LLCSFVAVAGGAFFLATAVFI.

Belongs to the major facilitator superfamily. Spinster (TC 2.A.1.49) family. In terms of tissue distribution, expressed in yolk cells.

It localises to the lysosome membrane. The catalysed reaction is a 1-acyl-sn-glycero-3-phosphocholine(out) + H(+)(out) = a 1-acyl-sn-glycero-3-phosphocholine(in) + H(+)(in). It carries out the reaction a 1-acyl-sn-glycero-3-phosphoethanolamine(out) + H(+)(out) = a 1-acyl-sn-glycero-3-phosphoethanolamine(in) + H(+)(in). It catalyses the reaction a 1-O-(1Z-alkenyl)-sn-glycero-3-phosphocholine(out) + H(+)(out) = a 1-O-(1Z-alkenyl)-sn-glycero-3-phosphocholine(in) + H(+)(in). The enzyme catalyses a 1-O-(1Z-alkenyl)-sn-glycero-3-phosphoethanolamine(out) + H(+)(out) = a 1-O-(1Z-alkenyl)-sn-glycero-3-phosphoethanolamine(in) + H(+)(in). Functionally, mediates the rate-limiting, proton-dependent, lysosomal efflux of lysophospholipids. Selective for zwitterionic headgroups such as lysophosphatidylcholine (LPC) and lysophosphatidylethanolamine (LPE). Essential player in lysosomal homeostasis. Critical for embryogenesis. Involved in the regulation of developmental senescence. The sequence is that of Protein spinster homolog 1 (spns1) from Danio rerio (Zebrafish).